The sequence spans 261 residues: MIVIKAGGRVIKNNLDGIIESLSNVGEQAIFVHGGGDQVTETSKKLGIEPVFVTSPEGIRSRYTSKEELEVFIMVMSLISRQIVSKLAYKKKVISLTGADGNSVIAERKKKIIIIDERGRKRIVDGGYTGKIKKVDSLVISDLLKSFDLLVFAPLAYDPEEKTLLNVDGDQMAFAIATAMKADTLILLTDVEGVLVDGKVINKLTSKEAKELSKRIGPGMNRKLLMAGETIENGVKKVIISSGLVQDPISNALQLRGTVIM.

Residues 35–36, Arg62, and Asn166 each bind substrate; that span reads GG.

This sequence belongs to the acetylglutamate kinase family. LysZ subfamily.

It localises to the cytoplasm. The enzyme catalyses [amino-group carrier protein]-C-terminal-N-(1,4-dicarboxybutan-1-yl)-L-glutamine + ATP = [amino-group carrier protein]-C-terminal-N-(1-carboxy-5-phosphooxy-5-oxopentan-1-yl)-L-glutamine + ADP. The catalysed reaction is [amino-group carrier protein]-C-terminal-gamma-(L-glutamyl)-L-glutamate + ATP = [amino-group carrier protein]-C-terminal-gamma-(5-phospho-L-glutamyl)-L-glutamate + ADP. It functions in the pathway amino-acid biosynthesis; L-lysine biosynthesis via AAA pathway; L-lysine from L-alpha-aminoadipate (Thermus route): step 2/5. The protein operates within amino-acid biosynthesis; L-arginine biosynthesis. Its function is as follows. Involved in both the arginine and lysine biosynthetic pathways. Phosphorylates the LysW-bound precursors glutamate (for arginine biosynthesis), respectively alpha-aminoadipate (for lysine biosynthesis). This chain is [LysW]-aminoadipate/[LysW]-glutamate kinase, found in Sulfurisphaera tokodaii (strain DSM 16993 / JCM 10545 / NBRC 100140 / 7) (Sulfolobus tokodaii).